A 287-amino-acid chain; its full sequence is uncharacterized protein (287 aa).

The next 10 membrane-spanning stretches (helical) occupy residues 7–28, 32–54, 67–86, 91–113, 120–139, 144–163, 170–192, 202–224, 231–253, and 263–280; these read LLLT…RAAL, AIDA…AVLL, GWRG…YAYV, GTGA…LLRG, ALLG…LPGA, LGGA…YTLL, PLAV…LLAF, GLAY…WYSA, IQGA…LLLG, and ATLA…PRLG. 2 consecutive EamA domains span residues 15–136 and 155–276; these read LAFA…FLLL and LAWG…LILA.

The protein localises to the cell membrane. This is an uncharacterized protein from Pseudomonas aeruginosa (strain ATCC 15692 / DSM 22644 / CIP 104116 / JCM 14847 / LMG 12228 / 1C / PRS 101 / PAO1).